Reading from the N-terminus, the 337-residue chain is tRNA N6-adenosine threonylcarbamoyltransferase (337 aa).

Fe cation is bound by residues His114 and His118. Substrate is bound by residues 136–140 (LVSGG), Asp169, Gly182, Asp186, and Asn275. Residue Asp301 participates in Fe cation binding.

It belongs to the KAE1 / TsaD family. The cofactor is Fe(2+).

Its subcellular location is the cytoplasm. It catalyses the reaction L-threonylcarbamoyladenylate + adenosine(37) in tRNA = N(6)-L-threonylcarbamoyladenosine(37) in tRNA + AMP + H(+). In terms of biological role, required for the formation of a threonylcarbamoyl group on adenosine at position 37 (t(6)A37) in tRNAs that read codons beginning with adenine. Is involved in the transfer of the threonylcarbamoyl moiety of threonylcarbamoyl-AMP (TC-AMP) to the N6 group of A37, together with TsaE and TsaB. TsaD likely plays a direct catalytic role in this reaction. The chain is tRNA N6-adenosine threonylcarbamoyltransferase from Streptococcus thermophilus (strain ATCC BAA-491 / LMD-9).